Reading from the N-terminus, the 323-residue chain is Protein translocase subunit SecF (323 aa).

Topologically, residues 1 to 22 (MAQEYTVEQLNHGRKVYDFMRW) are cytoplasmic. The chain crosses the membrane as a helical span at residues 23-43 (DYWAFGISGLLLIAAIVIMGV). Topologically, residues 44 to 142 (RGFNWGLDFT…FVGPSVGADL (99 aa)) are periplasmic. The chain crosses the membrane as a helical span at residues 143 to 163 (AQTGAMALMAALLSILVYVGF). Over 164 to 170 (RFEWRLA) the chain is Cytoplasmic. The chain crosses the membrane as a helical span at residues 171–191 (AGVVIALAHDVIITLGILSLF). At 192-196 (HIEID) the chain is on the periplasmic side. Residues 197–217 (LTIVASLMSVIGYSLNDSIVV) traverse the membrane as a helical segment. The Cytoplasmic portion of the chain corresponds to 218-247 (SDRIRENFRKIRRGTPYEIFNVSLTQTLHR). Residues 248–270 (TLITSGTTLMVILMLYLFGGPVL) form a helical membrane-spanning segment. Over 271-280 (EGFSLTMLIG) the chain is Periplasmic. A helical transmembrane segment spans residues 281-301 (VSIGTASSIYVASALALKLGM). The Cytoplasmic portion of the chain corresponds to 302-323 (KREHMLQQKVEKEGADQPSILP).

It belongs to the SecD/SecF family. SecF subfamily. Forms a complex with SecD. Part of the essential Sec protein translocation apparatus which comprises SecA, SecYEG and auxiliary proteins SecDF-YajC and YidC.

It localises to the cell inner membrane. Functionally, part of the Sec protein translocase complex. Interacts with the SecYEG preprotein conducting channel. SecDF uses the proton motive force (PMF) to complete protein translocation after the ATP-dependent function of SecA. The chain is Protein translocase subunit SecF from Escherichia coli O157:H7.